We begin with the raw amino-acid sequence, 345 residues long: 4-hydroxy-2-oxovalerate aldolase (345 aa).

The Pyruvate carboxyltransferase domain occupies 8–260; the sequence is ITVHDMTLRD…ETGVDVFKIQ (253 aa). Residue 16–17 participates in substrate binding; the sequence is RD. Mn(2+) is bound at residue aspartate 17. The active-site Proton acceptor is the histidine 20. Positions 170 and 199 each coordinate substrate. Histidine 199 and histidine 201 together coordinate Mn(2+). Residue tyrosine 290 participates in substrate binding.

Belongs to the 4-hydroxy-2-oxovalerate aldolase family.

The enzyme catalyses (S)-4-hydroxy-2-oxopentanoate = acetaldehyde + pyruvate. This chain is 4-hydroxy-2-oxovalerate aldolase, found in Leptothrix cholodnii (strain ATCC 51168 / LMG 8142 / SP-6) (Leptothrix discophora (strain SP-6)).